Reading from the N-terminus, the 399-residue chain is E3 ubiquitin-protein ligase APD4 (399 aa).

2 helical membrane-spanning segments follow: residues 42 to 62 and 284 to 304; these read FGII…GVYG and LIAY…AIHF. The RING-type zinc-finger motif lies at 348 to 387; sequence CAICFDAPRDCCFLPCGHCVSCYQCGTKIKRTKGRCPICR.

As to expression, expressed in the shoot apical meristems (SAM), root tips and inflorescences.

The protein resides in the endomembrane system. Its subcellular location is the vacuole membrane. The catalysed reaction is S-ubiquitinyl-[E2 ubiquitin-conjugating enzyme]-L-cysteine + [acceptor protein]-L-lysine = [E2 ubiquitin-conjugating enzyme]-L-cysteine + N(6)-ubiquitinyl-[acceptor protein]-L-lysine.. It functions in the pathway protein modification; protein ubiquitination. Functionally, involved in pollen mitosis II (PMII) regulation during male gametogenesis. This Arabidopsis thaliana (Mouse-ear cress) protein is E3 ubiquitin-protein ligase APD4.